The sequence spans 267 residues: Mediator of RNA polymerase II transcription subunit 8 (267 aa).

Coiled-coil stretches lie at residues 1-26 (MQRE…KNSL) and 116-160 (DVEE…EERE). The disordered stretch occupies residues 190–267 (GLSNRRPPGQ…KSASMHPYQR (78 aa)). Positions 227 to 245 (PPNQQQQHMAGVSMSQGSQ) are enriched in polar residues.

This sequence belongs to the Mediator complex subunit 8 family. As to quaternary structure, component of the Mediator complex. May be part of a multisubunit E3 ubiquitin-protein ligase complex.

Its subcellular location is the nucleus. It participates in protein modification; protein ubiquitination. Its function is as follows. Component of the Mediator complex, a coactivator involved in the regulated transcription of nearly all RNA polymerase II-dependent genes. Mediator functions as a bridge to convey information from gene-specific regulatory proteins to the basal RNA polymerase II transcription machinery. Mediator is recruited to promoters by direct interactions with regulatory proteins and serves as a scaffold for the assembly of a functional preinitiation complex with RNA polymerase II and the general transcription factors. May play a role as a target recruitment subunit in E3 ubiquitin-protein ligase complexes and thus in ubiquitination and subsequent proteasomal degradation of target proteins. In Xenopus tropicalis (Western clawed frog), this protein is Mediator of RNA polymerase II transcription subunit 8 (med8).